We begin with the raw amino-acid sequence, 167 residues long: MKRLETIRHMWSVVYDHFDIVNGKECCYVHTHLSNQNLIPSTVKTNLYMKTMGSCIQMDSMEALEYLSELKESGGWSPRPEMQEFEYPDGVEDTESIERLVEEFFNRSELQAGESVKFGNSINVKHTSVSAKQLRTRIRQQLPLYSHLLPTQRVDICSLELIIIHTK.

This sequence belongs to the Schlafen family. Subgroup poxviridae B3 subfamily.

The polypeptide is Schlafen-like protein (Bos taurus (Bovine)).